Here is a 206-residue protein sequence, read N- to C-terminus: Regulator of rDNA transcription protein 14 (206 aa).

A disordered region spans residues 178–206; that stretch reads FVKDHRYPGLTPGLAPVGLSDEEDSSEED. Residues Ser-197, Ser-202, and Ser-203 each carry the phosphoserine modification. Residues 197–206 show a composition bias toward acidic residues; sequence SDEEDSSEED.

The protein belongs to the RRT14 family.

The protein localises to the nucleus. It localises to the nucleolus. Its function is as follows. Involved in ribosome biogenesis, probably through modulation of rDNA transcription. The chain is Regulator of rDNA transcription protein 14 (RRT14) from Saccharomyces cerevisiae (strain ATCC 204508 / S288c) (Baker's yeast).